The chain runs to 425 residues: Cell adhesion molecule CEACAM16 (425 aa).

The first 20 residues, 1–20 (MALTGYSWLLLSATFLNVGA), serve as a signal peptide directing secretion. The N-linked (GlcNAc...) asparagine glycan is linked to Asn36. 2 Ig-like C2-type domains span residues 133–218 (PTVL…INLT) and 223–309 (PERV…ASVV). A disulfide bridge links Cys153 with Cys201. A glycan (N-linked (GlcNAc...) asparagine) is linked at Asn216. Cys252 and Cys293 form a disulfide bridge. A glycan (N-linked (GlcNAc...) asparagine) is linked at Asn394.

The protein belongs to the immunoglobulin superfamily. CEA family. Homooligomer; can for homodimers and homotetramers. Interacts with TECTA and TECTB.

It localises to the secreted. In terms of biological role, required for proper hearing, plays a role in maintaining the integrity of the tectorial membrane. The polypeptide is Cell adhesion molecule CEACAM16 (Homo sapiens (Human)).